A 306-amino-acid chain; its full sequence is MIFQRTVKEMVKTTGVGLHSGNKVTLSIKPAPVNTGIVLVRTDLEPAVAIPAKADLVRETTMCTALVNDEGVRISTIEHLFAALAGLGIDNAVIEVDAPEIPIMDGSASPWVFLLQSVGIQEQASAKKYLRIKNTVRVEDGDKWAELKPFKGFRVDFAIDFNHPEIARSQQHMVMDFSTSAFVRDISRARTFGFMRDIEYLRANNLALGGSMENAVVLDEYRVLNPDGLRYEDEFVKHKILDAFGDLYVAGYAIVGEFCAFKTGHALNNQLVRALLAQQDAWELVSFEKDEAPVSFSVPTGAAVFT.

Residues histidine 79, histidine 238, and aspartate 242 each contribute to the Zn(2+) site. Catalysis depends on histidine 265, which acts as the Proton donor.

Belongs to the LpxC family. Requires Zn(2+) as cofactor.

It catalyses the reaction a UDP-3-O-[(3R)-3-hydroxyacyl]-N-acetyl-alpha-D-glucosamine + H2O = a UDP-3-O-[(3R)-3-hydroxyacyl]-alpha-D-glucosamine + acetate. The protein operates within glycolipid biosynthesis; lipid IV(A) biosynthesis; lipid IV(A) from (3R)-3-hydroxytetradecanoyl-[acyl-carrier-protein] and UDP-N-acetyl-alpha-D-glucosamine: step 2/6. Catalyzes the hydrolysis of UDP-3-O-myristoyl-N-acetylglucosamine to form UDP-3-O-myristoylglucosamine and acetate, the committed step in lipid A biosynthesis. The protein is UDP-3-O-acyl-N-acetylglucosamine deacetylase of Shewanella sediminis (strain HAW-EB3).